The sequence spans 247 residues: 23S rRNA (guanosine-2'-O-)-methyltransferase RlmB (247 aa).

S-adenosyl-L-methionine contacts are provided by glycine 197, isoleucine 217, and leucine 226.

Belongs to the class IV-like SAM-binding methyltransferase superfamily. RNA methyltransferase TrmH family. RlmB subfamily.

It localises to the cytoplasm. The enzyme catalyses guanosine(2251) in 23S rRNA + S-adenosyl-L-methionine = 2'-O-methylguanosine(2251) in 23S rRNA + S-adenosyl-L-homocysteine + H(+). Its function is as follows. Specifically methylates the ribose of guanosine 2251 in 23S rRNA. The chain is 23S rRNA (guanosine-2'-O-)-methyltransferase RlmB from Vibrio cholerae serotype O1 (strain ATCC 39315 / El Tor Inaba N16961).